The following is a 74-amino-acid chain: ATP synthase subunit 9, mitochondrial (74 aa).

A run of 2 helical transmembrane segments spans residues 8–28 (IGAG…GLIF) and 50–70 (ILGF…AFLI).

The protein belongs to the ATPase C chain family. F-type ATPases have 2 components, CF(1) - the catalytic core - and CF(0) - the membrane proton channel. CF(1) has five subunits: alpha(3), beta(3), gamma(1), delta(1), epsilon(1). CF(0) has three main subunits: a, b and c.

Its subcellular location is the mitochondrion membrane. Its function is as follows. Mitochondrial membrane ATP synthase (F(1)F(0) ATP synthase or Complex V) produces ATP from ADP in the presence of a proton gradient across the membrane which is generated by electron transport complexes of the respiratory chain. F-type ATPases consist of two structural domains, F(1) - containing the extramembraneous catalytic core and F(0) - containing the membrane proton channel, linked together by a central stalk and a peripheral stalk. During catalysis, ATP synthesis in the catalytic domain of F(1) is coupled via a rotary mechanism of the central stalk subunits to proton translocation. Part of the complex F(0) domain. A homomeric c-ring of probably 10 subunits is part of the complex rotary element. The chain is ATP synthase subunit 9, mitochondrial (atp9) from Schizosaccharomyces pombe (strain 972 / ATCC 24843) (Fission yeast).